We begin with the raw amino-acid sequence, 575 residues long: uncharacterized protein (575 aa).

The N-terminal stretch at 1 to 28 (MSNLLWKSLVVSPAVLGATLLVSSAAIA) is a signal peptide. Residues 87–151 (SVSQFSDVQP…DRVNELIATA (65 aa)) enclose the SLH domain. The stretch at 158–196 (KQDLATLQRLQEEFSAELATLRGRVDALEARTAELEANQ) forms a coiled coil.

Belongs to the OprB family.

This is an uncharacterized protein from Nostoc sp. (strain PCC 7120 / SAG 25.82 / UTEX 2576).